Reading from the N-terminus, the 278-residue chain is Sulfur carrier protein FdhD (278 aa).

Residue Cys-121 is the Cysteine persulfide intermediate of the active site. Mo-bis(molybdopterin guanine dinucleotide) is bound at residue 260–265 (FCKPGR).

The protein belongs to the FdhD family.

Its subcellular location is the cytoplasm. Required for formate dehydrogenase (FDH) activity. Acts as a sulfur carrier protein that transfers sulfur from IscS to the molybdenum cofactor prior to its insertion into FDH. This Klebsiella pneumoniae subsp. pneumoniae (strain ATCC 700721 / MGH 78578) protein is Sulfur carrier protein FdhD.